Here is a 24-residue protein sequence, read N- to C-terminus: Caerin-2.1 (24 aa).

The protein belongs to the frog skin active peptide (FSAP) family. Caerin subfamily. Expressed by the skin dorsal glands.

It is found in the secreted. Its function is as follows. Inhibits the formation of NO by neuronal nitric oxide synthase. The protein is Caerin-2.1 of Litoria rothii (Roth's tree frog).